Consider the following 72-residue polypeptide: Tetrahydromethanopterin S-methyltransferase subunit G (72 aa).

The chain crosses the membrane as a helical span at residues 48 to 68 (IGILYGGFIGLLLFLIYTVVS).

It belongs to the MtrG family. In terms of assembly, the complex is composed of 8 subunits; MtrA, MtrB, MtrC, MtrD, MtrE, MtrF, MtrG and MtrH.

It localises to the cell membrane. The catalysed reaction is 5-methyl-5,6,7,8-tetrahydromethanopterin + coenzyme M + 2 Na(+)(in) = 5,6,7,8-tetrahydromethanopterin + methyl-coenzyme M + 2 Na(+)(out). It functions in the pathway one-carbon metabolism; methanogenesis from CO(2); methyl-coenzyme M from 5,10-methylene-5,6,7,8-tetrahydromethanopterin: step 2/2. Functionally, part of a complex that catalyzes the formation of methyl-coenzyme M and tetrahydromethanopterin from coenzyme M and methyl-tetrahydromethanopterin. This is an energy-conserving, sodium-ion translocating step. The polypeptide is Tetrahydromethanopterin S-methyltransferase subunit G (Methanosarcina barkeri (strain Fusaro / DSM 804)).